An 868-amino-acid polypeptide reads, in one-letter code: Monofunctional pimaradiene synthase (868 aa).

Mg(2+)-binding residues include aspartate 620, aspartate 624, asparagine 764, threonine 768, and glutamate 772.

It belongs to the terpene synthase family. Tpsd subfamily. Mg(2+) is required as a cofactor.

It carries out the reaction (+)-copalyl diphosphate = (-)-pimara-8(14),15-diene + diphosphate. The protein operates within terpene metabolism; oleoresin biosynthesis. In terms of biological role, involved in defensive oleoresin formation in conifers in response to insect attack or other injury. Involved in diterpene (C20) olefins biosynthesis. Monofunctional enzyme lacking the DXDD motif in the class II active site relevant for the cyclization of geranylgeranyl diphosphate (GGPP). Requires (+)-copalyl diphosphate ((+)-CPP) as substrate, but no activity with GGPP or ent-CPP. Pimaradiene is the major products of the enzyme. This Pinus banksiana (Jack pine) protein is Monofunctional pimaradiene synthase.